We begin with the raw amino-acid sequence, 372 residues long: MIVDLPLRRIQQFARLGAKHQSSVLIRLHTKGGIVGIGESITPCGPWWSGDSVEAIQATINHYLAPLVVGEPALDASRIMAKLHGRVAGNAFAKAGIEMALLDAVGKIVDAPIHVLLGGRFRDRLSVAWPLATGDVNQEVDEAFRMLEAGKAGAFKLKMGALPLAQDLRRALAIAKELEGKASLRVDPNEAWDEPTTMRALAPLEAAGVEIIEQPVARWNLDAMARIHRQARSMLLIDEGVQSLHDASEVVKRAAAGLVSLKIMKTGGMRPARAMADIANAGGMHVYMGTFLETSIGTAANMQLAASIESLPYGGEVIGPLLIEEDLCEVPAVYKEHALWLPEGPGLGIRLDENQVRRFARASSQRIDRHSA.

Lys-158 acts as the Proton acceptor in catalysis. 3 residues coordinate Mn(2+): Asp-187, Glu-213, and Asp-238. Catalysis depends on Glu-316, which acts as the Proton donor.

This sequence belongs to the mandelate racemase/muconate lactonizing enzyme family. Mn(2+) is required as a cofactor.

It catalyses the reaction 2-[(2R)-2-chloro-2,5-dihydro-5-oxofuryl]acetate = 3-chloro-cis,cis-muconate + H(+). It functions in the pathway aromatic compound metabolism; 3-chlorocatechol degradation. The sequence is that of Chloromuconate cycloisomerase (tfdDII) from Cupriavidus pinatubonensis (strain JMP 134 / LMG 1197) (Cupriavidus necator (strain JMP 134)).